A 261-amino-acid polypeptide reads, in one-letter code: Glutathione S-transferase theta-1 (261 aa).

In terms of domain architecture, GST N-terminal spans 2-101; it reads GLELYLDLLS…YLSRKYNTPD (100 aa). Residues 72–73 and 85–86 each bind glutathione; these read KV and EC. In terms of domain architecture, GST C-terminal spans 107-248; sequence DIKKRAQVDE…LSNIQIDPQL (142 aa).

This sequence belongs to the GST superfamily. Theta family. In terms of assembly, homodimer.

The protein resides in the cytoplasm. The catalysed reaction is RX + glutathione = an S-substituted glutathione + a halide anion + H(+). Its function is as follows. Conjugation of reduced glutathione to a wide number of exogenous and endogenous hydrophobic electrophiles. This is Glutathione S-transferase theta-1 (GSTT1) from Gallus gallus (Chicken).